A 93-amino-acid polypeptide reads, in one-letter code: Large ribosomal subunit protein eL37A (93 aa).

Cysteine 19, cysteine 22, cysteine 34, and cysteine 37 together coordinate Zn(2+). Residues 19–37 (CRRCGRSSYHIQKSTCAQC) form a C4-type zinc finger.

Belongs to the eukaryotic ribosomal protein eL37 family. The cofactor is Zn(2+).

Binds to the 23S rRNA. In Drosophila melanogaster (Fruit fly), this protein is Large ribosomal subunit protein eL37A.